Reading from the N-terminus, the 461-residue chain is Adenine DNA glycosylase (461 aa).

The Proton donor/acceptor role is filled by E69. Positions 226, 233, 236, and 242 each coordinate [4Fe-4S] cluster. The Nudix hydrolase domain occupies 296-437 (QREERALVVI…RAALEIKKRK (142 aa)). A Nudix box motif is present at residues 340 to 366 (FGQESWPKDMDAEFQKSIAQWISNDSR).

The protein belongs to the Nth/MutY family. Monomer. The cofactor is [4Fe-4S] cluster.

It carries out the reaction Hydrolyzes free adenine bases from 7,8-dihydro-8-oxoguanine:adenine mismatched double-stranded DNA, leaving an apurinic site.. In terms of biological role, adenine glycosylase active on G-A mispairs. Has glycosylase and nicking activities and is active at A/G and A/GO sites. In Schizosaccharomyces pombe (strain 972 / ATCC 24843) (Fission yeast), this protein is Adenine DNA glycosylase (myh1).